A 147-amino-acid polypeptide reads, in one-letter code: MALYGNFERSLDPKNRLSLPAKFKTELGSNFYLSVLLDGVVEIRNSEEFENEAHKFKTMNVLDKNARDFARLFFQRTVEVEADKQGRFVLPKHILEKASIQKDVVLVGMGDKVELWSKAKYDSFQDSIDDEKIENIAFKLKESGVEF.

2 SpoVT-AbrB domains span residues 6 to 48 (NFER…NSEE) and 77 to 120 (TVEV…SKAK).

The protein belongs to the MraZ family. In terms of assembly, forms oligomers.

The protein localises to the cytoplasm. Its subcellular location is the nucleoid. The sequence is that of Transcriptional regulator MraZ from Mycoplasmopsis pulmonis (strain UAB CTIP) (Mycoplasma pulmonis).